A 339-amino-acid polypeptide reads, in one-letter code: Centromere protein N (339 aa).

Phosphoserine is present on residues serine 226, serine 235, and serine 282.

It belongs to the CENP-N/CHL4 family. As to quaternary structure, component of the CENPA-NAC complex, at least composed of CENPA, CENPC, CENPH, CENPM, CENPN, CENPT and CENPU. The CENPA-NAC complex interacts with the CENPA-CAD complex, composed of CENPI, CENPK, CENPL, CENPO, CENPP, CENPQ, CENPR and CENPS. Interacts directly with CENPA. Identified in a centromere complex containing histones H2A, H2B and H4, and at least CENPA, CENPB, CENPC, CENPT, CENPN, HJURP, SUPT16H, SSRP1 and RSF1.

The protein localises to the nucleus. It localises to the chromosome. Its subcellular location is the centromere. It is found in the kinetochore. Functionally, component of the CENPA-NAC (nucleosome-associated) complex, a complex that plays a central role in assembly of kinetochore proteins, mitotic progression and chromosome segregation. The CENPA-NAC complex recruits the CENPA-CAD (nucleosome distal) complex and may be involved in incorporation of newly synthesized CENPA into centromeres. CENPN is the first protein to bind specifically to CENPA nucleosomes and the direct binding of CENPA nucleosomes by CENPN is required for centromere assembly. Required for chromosome congression and efficiently align the chromosomes on a metaphase plate. This Homo sapiens (Human) protein is Centromere protein N (CENPN).